A 219-amino-acid chain; its full sequence is 7-cyano-7-deazaguanine synthase (219 aa).

10 to 20 contributes to the ATP binding site; it reads FSGGQDSTTCL. Zn(2+) is bound by residues C188, C197, C200, and C203.

The protein belongs to the QueC family. As to quaternary structure, homodimer. Requires Zn(2+) as cofactor.

It catalyses the reaction 7-carboxy-7-deazaguanine + NH4(+) + ATP = 7-cyano-7-deazaguanine + ADP + phosphate + H2O + H(+). It functions in the pathway purine metabolism; 7-cyano-7-deazaguanine biosynthesis. In terms of biological role, catalyzes the ATP-dependent conversion of 7-carboxy-7-deazaguanine (CDG) to 7-cyano-7-deazaguanine (preQ(0)). The sequence is that of 7-cyano-7-deazaguanine synthase from Clostridium botulinum (strain ATCC 19397 / Type A).